An 87-amino-acid polypeptide reads, in one-letter code: MQKVTLGLLVFLAGFPVLDANDLEDKNSPFYYDWHSLQVGGLICAGVLCAMGIIIVMSAKCKCKFGQKSGHHPGETPPLITPGSAQS.

An N-terminal signal peptide occupies residues Met-1–Ala-20. Residues Asn-21–Gln-38 lie on the Extracellular side of the membrane. The helical transmembrane segment at Val-39 to Ala-59 threads the bilayer. At Lys-60–Ser-87 the chain is on the cytoplasmic side. A disordered region spans residues Gly-66–Ser-87.

This sequence belongs to the FXYD family. Regulatory subunit of the sodium/potassium-transporting ATPase which is composed of a catalytic alpha subunit, a non-catalytic beta subunit and an additional regulatory subunit. Interacts with catalytic alpha subunit ATP1A1. Also interacts with non-catalytic beta subunit ATP1B1. Interacts with the ATP1A1-ATP1B1, ATP1A2-ATP1B1 and ATP1A3-ATP1B1 NKA isozymes. Glutathionylated. Isoform 1: Expressed mainly in differentiated cells (at protein level). Isoform 2: Expressed mainly in undifferentiated cells (at protein level).

Its subcellular location is the cell membrane. Functionally, associates with and regulates the activity of the sodium/potassium-transporting ATPase (NKA) which transports Na(+) out of the cell and K(+) into the cell. Reduces glutathionylation of the NKA beta-1 subunit ATP1B1, thus reversing glutathionylation-mediated inhibition of ATP1B1. Induces a hyperpolarization-activated chloride current when expressed in Xenopus oocytes. Decreases the apparent K+ and Na+ affinity of the sodium/potassium-transporting ATPase over a large range of membrane potentials. Its function is as follows. Decreases the apparent K+ affinity of the sodium/potassium-transporting ATPase only at slightly negative and positive membrane potentials and increases the apparent Na+ affinity over a large range of membrane potentials. The chain is FXYD domain-containing ion transport regulator 3 (FXYD3) from Homo sapiens (Human).